The chain runs to 330 residues: MRKIAIDAMGGENAPEEIVEAVLKAKPELPEDKFIFFGDEGKMKELLPADDDQIEIVATTEVILDEDEPVKAMRTKKDSSMVVAANWVKEGKADALLSLGNTGALLTCGIFIVGRIKGVARPGLMPTMPVESSDDGFNIIDVGANATSKPEYLLQWAEMASYYAEKVRGVSKPRVALLNNGAEFDKGDDLHKEVYQLLQDSSLNFTGNIEGHELLQGKADVVVTDGFTGNAVLKSIEGTGSVIIHMLKDGLLNNGVKAKLGALLAKDALKSVASRFDKDKYGGAVLLGLNSPVVKQHGRSDARAVYYAVKQIDKILTEDLTNTFKQEFSK.

The protein belongs to the PlsX family. As to quaternary structure, homodimer. Probably interacts with PlsY.

Its subcellular location is the cytoplasm. It catalyses the reaction a fatty acyl-[ACP] + phosphate = an acyl phosphate + holo-[ACP]. The protein operates within lipid metabolism; phospholipid metabolism. Its function is as follows. Catalyzes the reversible formation of acyl-phosphate (acyl-PO(4)) from acyl-[acyl-carrier-protein] (acyl-ACP). This enzyme utilizes acyl-ACP as fatty acyl donor, but not acyl-CoA. This is Phosphate acyltransferase from Lactobacillus delbrueckii subsp. bulgaricus (strain ATCC 11842 / DSM 20081 / BCRC 10696 / JCM 1002 / NBRC 13953 / NCIMB 11778 / NCTC 12712 / WDCM 00102 / Lb 14).